The following is a 118-amino-acid chain: Basic phospholipase A2 homolog 1 (118 aa).

7 disulfide bridges follow: Cys-11–Cys-71, Cys-27–Cys-117, Cys-29–Cys-45, Cys-44–Cys-98, Cys-51–Cys-91, Cys-60–Cys-84, and Cys-78–Cys-89. The segment at 106 to 118 (NKNFNIDTKKRCK) is important for membrane-damaging activities in eukaryotes and bacteria; heparin-binding.

It belongs to the phospholipase A2 family. Group I subfamily. D49 sub-subfamily. Expressed by the venom gland.

The protein resides in the secreted. This Laticauda colubrina (Yellow-lipped sea krait) protein is Basic phospholipase A2 homolog 1.